The following is a 591-amino-acid chain: MRLFARLEVLAILACAVPIAAIPSFLSNSYPAHPAEGVSLFPQTQPQAPLGLWTRLRNTVIERLWRVPPQLNKNRPGKQGKFPLFSAPVSLRARYGDDVVLRFTIRNAEEVKALAEASNILFLDVWASTDEWVDIRLTKDVVPSLLGLLPQSLQTSHIPLIHDLPQTIYESYPSSSQRSSYDVQGFSPSTKHSSDITNIFFQDYQPFSVIVTWMRFLTSMFSSHVQIINIGSTFEGRDIPALQIGVWPANNPKPRKTVVVSGGSHAREWISVSTVNYVAYSLITSYAKSKHVAELLQQFDFIFIPTLNPDGYIYTWEVDRIWRKNRQETSLPFCPGVDLDRTWGFEWDGNITADNPCSESYPGEDPFAGVEAKQFSQWAKNQTAQNNIEFVAFIDLHSYSQQIRYPYSYSCLPNPPNLENLEELAIGIAKAIRLTNRETYEVSSACEGFMASQAKAKSDDPFPRIERTGGSALDWFYHDLNVKYSYQIKLRDRGSYGFLLPRENIVPTGQEMFNAVMVLGRFLSGHDGFGHLDWEDESQRPKADEDDIPSENELGENDDSWIPFDYRNHDDQNEGEGYDNDEWGFRRRRKG.

The first 21 residues, 1–21 (MRLFARLEVLAILACAVPIAA), serve as a signal peptide directing secretion. A propeptide spanning residues 22-175 (IPSFLSNSYP…QTIYESYPSS (154 aa)) is cleaved from the precursor. Residues 203 to 523 (DYQPFSVIVT…NAVMVLGRFL (321 aa)) enclose the Peptidase M14 domain. The Zn(2+) site is built by His265 and Glu268. Substrate-binding positions include 265-268 (HARE), Arg323, and 340-341 (DR). Cysteines 334 and 357 form a disulfide. 2 N-linked (GlcNAc...) asparagine glycosylation sites follow: Asn350 and Asn381. His397 contacts Zn(2+). 398-399 (SY) provides a ligand contact to substrate. Residues 533-543 (DWEDESQRPKA) show a composition bias toward basic and acidic residues. Positions 533-591 (DWEDESQRPKADEDDIPSENELGENDDSWIPFDYRNHDDQNEGEGYDNDEWGFRRRRKG) are disordered. 2 stretches are compositionally biased toward acidic residues: residues 544–559 (DEDDIPSENELGENDD) and 573–582 (NEGEGYDNDE).

This sequence belongs to the peptidase M14 family. Zn(2+) is required as a cofactor.

The protein resides in the vacuole. It localises to the secreted. Its function is as follows. Inactive carboxypeptidase that may play a role in cell wall organization and biogenesis. In Paracoccidioides lutzii (strain ATCC MYA-826 / Pb01) (Paracoccidioides brasiliensis), this protein is Inactive metallocarboxypeptidase ECM14 (ECM14).